Consider the following 355-residue polypeptide: UDP-N-acetylglucosamine--N-acetylmuramyl-(pentapeptide) pyrophosphoryl-undecaprenol N-acetylglucosamine transferase (355 aa).

UDP-N-acetyl-alpha-D-glucosamine is bound by residues 15 to 17 (TGG), Asn-127, Arg-163, Ser-191, Ile-244, 263 to 268 (ALTVSE), and Gln-288.

The protein belongs to the glycosyltransferase 28 family. MurG subfamily.

It localises to the cell inner membrane. It catalyses the reaction di-trans,octa-cis-undecaprenyl diphospho-N-acetyl-alpha-D-muramoyl-L-alanyl-D-glutamyl-meso-2,6-diaminopimeloyl-D-alanyl-D-alanine + UDP-N-acetyl-alpha-D-glucosamine = di-trans,octa-cis-undecaprenyl diphospho-[N-acetyl-alpha-D-glucosaminyl-(1-&gt;4)]-N-acetyl-alpha-D-muramoyl-L-alanyl-D-glutamyl-meso-2,6-diaminopimeloyl-D-alanyl-D-alanine + UDP + H(+). Its pathway is cell wall biogenesis; peptidoglycan biosynthesis. Its function is as follows. Cell wall formation. Catalyzes the transfer of a GlcNAc subunit on undecaprenyl-pyrophosphoryl-MurNAc-pentapeptide (lipid intermediate I) to form undecaprenyl-pyrophosphoryl-MurNAc-(pentapeptide)GlcNAc (lipid intermediate II). The sequence is that of UDP-N-acetylglucosamine--N-acetylmuramyl-(pentapeptide) pyrophosphoryl-undecaprenol N-acetylglucosamine transferase from Escherichia coli O157:H7.